The chain runs to 410 residues: Chitin deacetylase 3 (410 aa).

Residues 1 to 18 (MYGHLSLSTLSLLAVVAA) form the signal peptide. A propeptide spanning residues 19–39 (APFPESWLQPRDSDVSQLFRR) is cleaved from the precursor. 2 N-linked (GlcNAc...) asparagine glycosylation sites follow: N61 and N80. Residues 124 to 314 (KVWALSFDDG…KAVANGWSVK (191 aa)) form the NodB homology domain. The active-site Proton acceptor is D131. D131 is an acetate binding site. D132 lines the Co(2+) pocket. N-linked (GlcNAc...) asparagine glycosylation occurs at N149. Co(2+) contacts are provided by H183 and H187. Position 225 (Y225) interacts with acetate. N279 carries an N-linked (GlcNAc...) asparagine glycan. Residue H289 is the Proton donor of the active site. The N-linked (GlcNAc...) asparagine glycan is linked to N293. S385 is lipidated: GPI-anchor amidated serine. Positions 386 to 410 (SSWPIANRPSLFVIACGLALAAIMV) are cleaved as a propeptide — removed in mature form.

The protein belongs to the polysaccharide deacetylase family. Co(2+) serves as cofactor.

It localises to the cell membrane. It carries out the reaction [(1-&gt;4)-N-acetyl-beta-D-glucosaminyl](n) + n H2O = chitosan + n acetate. Its function is as follows. Hydrolyzes the N-acetamido groups of N-acetyl-D-glucosamine residues in chitin to form chitosan and acetate. Chitosan is required to anchor melanin to the cell wall, for maintenance of cell wall integrity, and for proper cytokinesis. Chitosan offers an advantage during infection as it is less readily detected than chitin by host immunosurveillance mechanisms. The protein is Chitin deacetylase 3 of Cryptococcus neoformans var. neoformans serotype D (strain JEC21 / ATCC MYA-565) (Filobasidiella neoformans).